We begin with the raw amino-acid sequence, 327 residues long: Interleukin-12 subunit beta (327 aa).

The first 22 residues, Met-1–Ala-22, serve as a signal peptide directing secretion. An Ig-like C2-type domain is found at Ile-23–Lys-106. A disulfide bond links Cys-50 and Cys-90. Asn-223 is a glycosylation site (N-linked (GlcNAc...) asparagine). Residues Pro-238–Ser-327 form the Fibronectin type-III domain.

The protein belongs to the IL-12B family. As to quaternary structure, heterodimer with IL12A; disulfide-linked. The heterodimer is known as interleukin IL-12. Heterodimer with IL23A; disulfide-linked. The heterodimer is known as interleukin IL-23. Also secreted as a monomer. Interacts with NBR1; this interaction promotes IL-12 secretion.

The protein resides in the secreted. Functionally, cytokine that can act as a growth factor for activated T and NK cells, enhance the lytic activity of NK/lymphokine-activated killer cells, and stimulate the production of IFN-gamma by resting PBMC. Its function is as follows. Associates with IL23A to form the IL-23 interleukin, a heterodimeric cytokine which functions in innate and adaptive immunity. IL-23 may constitute with IL-17 an acute response to infection in peripheral tissues. IL-23 binds to a heterodimeric receptor complex composed of IL12RB1 and IL23R, activates the Jak-Stat signaling cascade, stimulates memory rather than naive T-cells and promotes production of pro-inflammatory cytokines. IL-23 induces autoimmune inflammation and thus may be responsible for autoimmune inflammatory diseases and may be important for tumorigenesis. The chain is Interleukin-12 subunit beta (IL12B) from Capra hircus (Goat).